The sequence spans 90 residues: Probable oxaloacetate decarboxylase gamma chain 2 (90 aa).

A helical transmembrane segment spans residues 10 to 32 (GINLLTLGMGFVFIFLIFLVYAT).

This sequence belongs to the OadG family. In terms of assembly, heterotrimer of an alpha, a beta and a gamma subunit. The cofactor is Na(+).

The protein resides in the cell membrane. The enzyme catalyses oxaloacetate + 2 Na(+)(in) + H(+) = pyruvate + 2 Na(+)(out) + CO2. Functionally, catalyzes the decarboxylation of oxaloacetate coupled to Na(+) translocation. The chain is Probable oxaloacetate decarboxylase gamma chain 2 (oadG2) from Vibrio cholerae serotype O1 (strain ATCC 39315 / El Tor Inaba N16961).